A 1020-amino-acid polypeptide reads, in one-letter code: Protein translocase subunit SecA (1020 aa).

ATP is bound by residues Gln-143, 161-165 (GEGKT), and Asp-661. The segment at 974–1020 (SVYNASPGAENEAPLQRPVTADSKPGRNDPCPCGSGKKYKNCHGQQP) is disordered. Cys-1004, Cys-1006, Cys-1015, and His-1016 together coordinate Zn(2+).

Belongs to the SecA family. Monomer and homodimer. Part of the essential Sec protein translocation apparatus which comprises SecA, SecYEG and auxiliary proteins SecDF. Other proteins may also be involved. The cofactor is Zn(2+).

Its subcellular location is the cell inner membrane. It is found in the cytoplasm. The enzyme catalyses ATP + H2O + cellular proteinSide 1 = ADP + phosphate + cellular proteinSide 2.. Its function is as follows. Part of the Sec protein translocase complex. Interacts with the SecYEG preprotein conducting channel. Has a central role in coupling the hydrolysis of ATP to the transfer of proteins into and across the cell membrane, serving as an ATP-driven molecular motor driving the stepwise translocation of polypeptide chains across the membrane. The sequence is that of Protein translocase subunit SecA from Chlorobium phaeovibrioides (strain DSM 265 / 1930) (Prosthecochloris vibrioformis (strain DSM 265)).